The sequence spans 246 residues: NAD-dependent protein deacetylase (246 aa).

The Deacetylase sirtuin-type domain maps to 1–246; sequence MKKPDIQQLK…VIEEIVNSNS (246 aa). Residues Ala25, Phe36, Arg37, Gln106, Ile108, Asp109, and His124 each contribute to the NAD(+) site. Phe36 contacts nicotinamide. 2 residues coordinate nicotinamide: Ile108 and Asp109. Residue His124 is the Proton acceptor of the active site. Zn(2+) contacts are provided by Cys132, Cys135, Cys152, and Cys155. NAD(+) is bound by residues Ser193, Ser194, Asn216, and Asp233.

This sequence belongs to the sirtuin family. Class U subfamily. It depends on Zn(2+) as a cofactor.

It localises to the cytoplasm. The catalysed reaction is N(6)-acetyl-L-lysyl-[protein] + NAD(+) + H2O = 2''-O-acetyl-ADP-D-ribose + nicotinamide + L-lysyl-[protein]. Functionally, NAD-dependent protein deacetylase which modulates the activities of several enzymes which are inactive in their acetylated form. This is NAD-dependent protein deacetylase from Staphylococcus epidermidis (strain ATCC 12228 / FDA PCI 1200).